The sequence spans 670 residues: Solute carrier organic anion transporter family member 1A3 (670 aa).

Over 1-20 (MGDLEKGAATHGAGCFAKIK) the chain is Cytoplasmic. A helical transmembrane segment spans residues 21–40 (VFLMALTCAYVSKSLSGTFM). Residues 41 to 59 (SSMLTQIERQFGIPTAIVG) are Extracellular-facing. The chain crosses the membrane as a helical span at residues 60–80 (FINGSFEIGNLLLIIFVSYFG). The Cytoplasmic segment spans residues 81–86 (MKLHRP). A helical membrane pass occupies residues 87–111 (IVIGVGCAVMGLGCFIISLPHFLMG). Topologically, residues 112-155 (RYEYETTILPTSNLSSNSFLCMENQTQTLNPAQDPAECVKEVKS) are extracellular. 2 N-linked (GlcNAc...) asparagine glycosylation sites follow: Asn-124 and Asn-135. Residues 156-184 (LMWIYVLVGNIIRGIGETPIMPLGVSYIE) traverse the membrane as a helical segment. Over 185–203 (NFAKSENSPLYIGILETGK) the chain is Cytoplasmic. The chain crosses the membrane as a helical span at residues 204 to 224 (MIGPIFGLLLGSFCASIYVDT). The Extracellular segment spans residues 225–242 (GSVNTDDLTITPTDIRWV). The chain crosses the membrane as a helical span at residues 243–267 (GAWWIGFLVCAGVNILISIPFFFFP). The Cytoplasmic portion of the chain corresponds to 268-311 (KTLPKEGLQENVDGTENAKEESTEKRPRKKNRGITKDFFPFLKS). Residues 277-296 (ENVDGTENAKEESTEKRPRK) form a disordered region. Basic and acidic residues predominate over residues 283 to 292 (ENAKEESTEK). The helical transmembrane segment at 312–333 (PVLQPDLHAVHPYKVLQVNAFN) threads the bilayer. The Extracellular segment spans residues 334–353 (IYFSFLPKYLENQYGKSTAE). Residues 354–377 (VIFLMGVYNLPAICIGYLIAGFMM) form a helical membrane-spanning segment. The Cytoplasmic portion of the chain corresponds to 378–381 (KKFK). The chain crosses the membrane as a helical span at residues 382–405 (ITVKTAAFLAFCLSLSEYSFGFCN). Over 406–513 (FLITCDNVPV…PECTNKLQYL (108 aa)) the chain is Extracellular. Residues 433-488 (NNVLADCNTRCSCLTKTWDPVCGDNGLAYMSACLAGCEKSVGTGTNMVFHNCSCIQ) form the Kazal-like domain. 3 disulfide bridges follow: Cys-439–Cys-469, Cys-445–Cys-465, and Cys-454–Cys-486. N-linked (GlcNAc...) asparagine glycans are attached at residues Asn-483 and Asn-492. A helical membrane pass occupies residues 514–536 (LILSGFLSILYSFAAIPGYMVFL). Residues 537–545 (RCIKSEEKS) lie on the Cytoplasmic side of the membrane. The helical transmembrane segment at 546–571 (LGIGIHAFCIRVFAGIPAPIYFGALI) threads the bilayer. Residues 572 to 605 (DRTCLHWGTQKCGAPGACRMYDINSFRRIYLGMS) lie on the Extracellular side of the membrane. Residues 606-623 (AALRGSSYLPAFVIVILT) traverse the membrane as a helical segment. Residues 624–670 (RKFSLPGKINSSEMEIAEMKLTEKESQCTDVHRNPKFKNDGELKTKL) lie on the Cytoplasmic side of the membrane.

It belongs to the organo anion transporter (TC 2.A.60) family. As to expression, all isoforms are detected in kidney, and many are kidney specific. Isoforms 2 and 13 are also detected in liver. Isoforms 4 and 9/K4 are ubiquitous, but isoform 9/K13 is kidney specific. Isoforms 5 and 14 are detected in all tissues tested, with the exception of pancreas and spleen. Isoforms 11 and 15 are detected in kidney, pancreas and testis. Isoform 7 is detected in kidney, liver, testis and spleen.

It is found in the cell membrane. Its function is as follows. Mediates the Na(+)-independent transport of organic anions such as methotrexate, taurocholate, folate and prostaglandin E2. May contribute to renal secretion and/or reabsorption of hydrophobic anionic compounds. Mediates renal clearance of methotrexate from the blood. The chain is Solute carrier organic anion transporter family member 1A3 (Slco1a3) from Rattus norvegicus (Rat).